Here is a 557-residue protein sequence, read N- to C-terminus: Tight junction-associated protein 1 (557 aa).

Positions 1–37 are disordered; that stretch reads MTSAAPAKKPYRKAPPEHRELRLEIPGSRLEQEEPLT. Position 2 is an N-acetylthreonine (Thr-2). Residues 14–23 are compositionally biased toward basic and acidic residues; the sequence is APPEHRELRL. Residues 42 to 171 are a coiled coil; the sequence is MKLLQEENEE…EELNERYRLD (130 aa). 2 disordered regions span residues 266-303 and 309-328; these read MSEG…SPEE and AFEK…LYPG. Residues 274–286 are compositionally biased toward pro residues; it reads PASPPAPGSPTPQ. Phosphoserine is present on Ser-300. The span at 316–325 shows a compositional bias: pro residues; that stretch reads YPTPSPPHPL. Thr-318 is subject to Phosphothreonine. 2 positions are modified to phosphoserine: Ser-320 and Ser-345. The segment at 364-409 is disordered; the sequence is EEGSERARPSPVPSTPASAQASPHHQPSPAPLTLSAPASSASSEED. Residues 378-388 are compositionally biased toward polar residues; sequence TPASAQASPHH. Residues 394–405 show a composition bias toward low complexity; sequence PLTLSAPASSAS. Thr-422 is subject to Phosphothreonine. A compositionally biased stretch (basic and acidic residues) spans 439 to 456; sequence LPELQRHFAHSPADRDEV. The tract at residues 439–557 is disordered; the sequence is LPELQRHFAH…QAQEQGNLLN (119 aa). Ser-491 bears the Phosphoserine mark. The span at 530-542 shows a compositional bias: basic residues; sequence RSPKRMGVHHLHR. Ser-545 carries the phosphoserine modification. The segment covering 546-557 has biased composition (polar residues); that stretch reads LTQAQEQGNLLN.

As to quaternary structure, interacts with DLG1. Interacts with ARF6 (GTP-bound form). Ubiquitously expressed.

It is found in the golgi apparatus. The protein resides in the trans-Golgi network. It localises to the cell junction. Its subcellular location is the tight junction. The protein localises to the cell membrane. In terms of biological role, plays a role in regulating the structure of the Golgi apparatus. This is Tight junction-associated protein 1 from Homo sapiens (Human).